A 137-amino-acid polypeptide reads, in one-letter code: Probable S-adenosyl-L-methionine-binding protein MTH_1797 (137 aa).

The TsaA-like domain maps to 8 to 137 (IRPVGVVRSP…YYEDIDSLGF (130 aa)). S-adenosyl-L-methionine contacts are provided by residues 25–27 (PAQ), 63–64 (HL), Arg-87, Leu-97, and 117–120 (LDGS).

Belongs to the tRNA methyltransferase O family.

The polypeptide is Probable S-adenosyl-L-methionine-binding protein MTH_1797 (Methanothermobacter thermautotrophicus (strain ATCC 29096 / DSM 1053 / JCM 10044 / NBRC 100330 / Delta H) (Methanobacterium thermoautotrophicum)).